A 486-amino-acid chain; its full sequence is Retrograde regulation protein 3 (486 aa).

A 9aaTAD 1 motif is present at residues 27–35 (ETLDFSLVT). Polar residues-rich tracts occupy residues 75 to 94 (NNNL…TAST) and 101 to 130 (SQSS…IGQG). The disordered stretch occupies residues 75–130 (NNNLMGSQARSNSQTPTASTIYEEAESQSSYLDDMFRTSQGGRPVTQNSISSIGQG). Residues Ser81, Ser123, and Ser142 each carry the phosphoserine modification. Thr150 carries the post-translational modification Phosphothreonine. The 9aaTAD 2 signature appears at 189–197 (SSINSDMMT). Residues Ser227, Ser236, and Ser241 each carry the phosphoserine modification. The tract at residues 243–274 (RHGSINTPRTRHTSISSNMTENIGPGSVPKIL) is disordered. The span at 246 to 263 (SINTPRTRHTSISSNMTE) shows a compositional bias: polar residues. Ser269 carries the post-translational modification Phosphoserine. The bHLH domain maps to 285 to 344 (RKREFHNAVERRRRELIKQKIKELGQLVPPSLLNYDDLGKQIKPNKGIILDRTVEYLQYL). The tract at residues 374–395 (ALSPFTNNHHASSGQNNSENSE) is disordered.

As to quaternary structure, binds DNA as a heterodimer with RTG1.

Its subcellular location is the nucleus. Its function is as follows. Transcription factor that regulates CIT2 gene expression. Binds to two identical sites oriented as inverted repeats 28 bp apart in a regulatory upstream activation sequence element (UASR) in the CIT2 promoter. The core binding site is 5'-GGTCAC-3'. In Saccharomyces cerevisiae (strain ATCC 204508 / S288c) (Baker's yeast), this protein is Retrograde regulation protein 3 (RTG3).